Here is a 56-residue protein sequence, read N- to C-terminus: Large ribosomal subunit protein bL32 (56 aa).

The disordered stretch occupies residues 1 to 27 (MAVQQNKKSRSRRDMRRSHDALTTAAV). The span at 7–16 (KKSRSRRDMR) shows a compositional bias: basic residues.

Belongs to the bacterial ribosomal protein bL32 family.

This chain is Large ribosomal subunit protein bL32, found in Actinobacillus pleuropneumoniae serotype 7 (strain AP76).